We begin with the raw amino-acid sequence, 241 residues long: Carboxy-S-adenosyl-L-methionine synthase (241 aa).

S-adenosyl-L-methionine contacts are provided by residues Tyr38, 63–65 (GCS), 88–89 (DN), 116–117 (DI), Asn131, and Arg198.

This sequence belongs to the class I-like SAM-binding methyltransferase superfamily. Cx-SAM synthase family. In terms of assembly, homodimer.

The catalysed reaction is prephenate + S-adenosyl-L-methionine = carboxy-S-adenosyl-L-methionine + 3-phenylpyruvate + H2O. Functionally, catalyzes the conversion of S-adenosyl-L-methionine (SAM) to carboxy-S-adenosyl-L-methionine (Cx-SAM). This Haemophilus influenzae (strain PittGG) protein is Carboxy-S-adenosyl-L-methionine synthase.